Reading from the N-terminus, the 84-residue chain is Small ribosomal subunit protein uS17 (84 aa).

It belongs to the universal ribosomal protein uS17 family. In terms of assembly, part of the 30S ribosomal subunit.

Functionally, one of the primary rRNA binding proteins, it binds specifically to the 5'-end of 16S ribosomal RNA. This chain is Small ribosomal subunit protein uS17, found in Photobacterium profundum (strain SS9).